The primary structure comprises 465 residues: tRNA modification GTPase MnmE (465 aa).

The (6S)-5-formyl-5,6,7,8-tetrahydrofolate site is built by R27, E91, and R130. The 160-residue stretch at 227 to 386 (GLSTAIIGRP…LEAKIADLFF (160 aa)) folds into the TrmE-type G domain. N237 contributes to the K(+) binding site. GTP contacts are provided by residues 237–242 (NVGKSS), 256–262 (TDIAGTT), and 281–284 (DTAG). S241 provides a ligand contact to Mg(2+). Residues T256, I258, and T261 each contribute to the K(+) site. T262 contributes to the Mg(2+) binding site. K465 contributes to the (6S)-5-formyl-5,6,7,8-tetrahydrofolate binding site.

The protein belongs to the TRAFAC class TrmE-Era-EngA-EngB-Septin-like GTPase superfamily. TrmE GTPase family. Homodimer. Heterotetramer of two MnmE and two MnmG subunits. K(+) serves as cofactor.

Its subcellular location is the cytoplasm. Functionally, exhibits a very high intrinsic GTPase hydrolysis rate. Involved in the addition of a carboxymethylaminomethyl (cmnm) group at the wobble position (U34) of certain tRNAs, forming tRNA-cmnm(5)s(2)U34. This chain is tRNA modification GTPase MnmE, found in Enterococcus faecalis (strain ATCC 700802 / V583).